A 310-amino-acid chain; its full sequence is Cytochrome f (310 aa).

The signal sequence occupies residues 1–23; sequence MRRLIPILLGSLVLSLSILVAPA. Heme is bound by residues tyrosine 28, cysteine 48, cysteine 51, and histidine 52. Residues 277–297 traverse the membrane as a helical segment; sequence IYGLLAFFVAVSLAQILLVLK.

Belongs to the cytochrome f family. As to quaternary structure, the 4 large subunits of the cytochrome b6-f complex are cytochrome b6, subunit IV (17 kDa polypeptide, PetD), cytochrome f and the Rieske protein, while the 4 small subunits are PetG, PetL, PetM and PetN. The complex functions as a dimer. Heme serves as cofactor.

The protein localises to the cellular thylakoid membrane. Component of the cytochrome b6-f complex, which mediates electron transfer between photosystem II (PSII) and photosystem I (PSI), cyclic electron flow around PSI, and state transitions. The protein is Cytochrome f of Prochlorococcus marinus (strain MIT 9313).